Consider the following 169-residue polypeptide: Glycine-rich RNA-binding protein GRP2A (169 aa).

The region spanning 8-86 (YRCFVGGLAW…RSITVNEAQS (79 aa)) is the RRM domain. Disordered stretches follow at residues 69 to 100 (MNGQ…GGGG) and 125 to 169 (YSGG…GGGW). The segment covering 89 to 100 (SGAGGGGRGGGG) has biased composition (gly residues).

Predominantly expressed in meristematic and growing tissue.

The protein localises to the nucleus. In terms of biological role, may play a general role in circadian phenomena associated with meristematic tissue. The sequence is that of Glycine-rich RNA-binding protein GRP2A from Sinapis alba (White mustard).